The following is a 557-amino-acid chain: MELRTRGWWLLCAAAALVVCARGDPASKSRSCSEVRQIYGAKGFSLSDVPQAEISGEHLRICPQGYTCCTSEMEENLANHSRMELESALHDSSRALQATLATQLHGIDDHFQRLLNDSERTLQEAFPGAFGDLYTQNTRAFRDLYAELRLYYRGANLHLEETLAEFWARLLERLFKQLHPQLLPDDYLDCLGKQAEALRPFGDAPRELRLRATRAFVAARSFVQGLGVASDVVRKVAQVPLAPECSRAIMKLVYCAHCRGVPGARPCPDYCRNVLKGCLANQADLDAEWRNLLDSMVLITDKFWGPSGAESVIGGVHVWLAEAINALQDNKDTLTAKVIQACGNPKVNPHGSGPEEKRRRGKLALQEKPSTGTLEKLVSEAKAQLRDIQDFWISLPGTLCSEKMAMSPASDDRCWNGISKGRYLPEVMGDGLANQINNPEVEVDITKPDMTIRQQIMQLKIMTNRLRGAYGGNDVDFQDASDDGSGSGSGGGCPDDTCGRRVSKKSSSSRTPLTHALPGLSEQEGQKTSAATCPEPHSFFLLFLVTLVLAAARPRWR.

Residues 1 to 23 form the signal peptide; it reads MELRTRGWWLLCAAAALVVCARG. Cystine bridges form between Cys-32-Cys-68, Cys-62-Cys-255, Cys-69-Cys-258, Cys-190-Cys-342, Cys-245-Cys-278, Cys-267-Cys-414, and Cys-271-Cys-400. 2 N-linked (GlcNAc...) asparagine glycosylation sites follow: Asn-79 and Asn-116. Positions 477-531 are disordered; it reads FQDASDDGSGSGSGGGCPDDTCGRRVSKKSSSSRTPLTHALPGLSEQEGQKTSAA. O-linked (Xyl...) (heparan sulfate) serine glycosylation is found at Ser-485, Ser-487, and Ser-489. Residue Ser-529 is the site of GPI-anchor amidated serine attachment. The propeptide at 530–557 is removed in mature form; sequence AATCPEPHSFFLLFLVTLVLAAARPRWR.

This sequence belongs to the glypican family. S-nitrosylated in a Cu(2+)-dependent manner. Nitric acid (NO) is released from the nitrosylated cysteines by ascorbate or by some other reducing agent, in a Cu(2+) or Zn(2+) dependent manner. This free nitric oxide is then capable of cleaving the heparan sulfate side chains. In terms of processing, N- and O-glycosylated. N-glycosylation is mainly of the complex type containing sialic acid. O-glycosylated with heparan sulfate. The heparan sulfate chains can be cleaved either by the action of heparanase or, degraded by a deaminative process that uses nitric oxide (NO) released from the S-nitrosylated cysteines. This process is triggered by ascorbate, or by some other reducing agent, in a Cu(2+)- or Zn(2+) dependent manner. Cu(2+) ions are provided by ceruloproteins such as APP, PRNP or CP which associate with GCP1 in intracellular compartments or lipid rafts. Post-translationally, this cell-associated glypican is further processed to give rise to a medium-released species.

Its subcellular location is the cell membrane. The protein resides in the endosome. It localises to the secreted. It is found in the extracellular space. Cell surface proteoglycan that bears heparan sulfate. Binds, via the heparan sulfate side chains, alpha-4 (V) collagen and participates in Schwann cell myelination. May act as a catalyst in increasing the rate of conversion of prion protein PRPN(C) to PRNP(Sc) via associating (via the heparan sulfate side chains) with both forms of PRPN, targeting them to lipid rafts and facilitating their interaction. Required for proper skeletal muscle differentiation by sequestering FGF2 in lipid rafts preventing its binding to receptors (FGFRs) and inhibiting the FGF-mediated signaling. Binds Cu(2+) or Zn(2+) ions. This Mus musculus (Mouse) protein is Glypican-1 (Gpc1).